We begin with the raw amino-acid sequence, 527 residues long: Putative GTP-binding protein 6 (527 aa).

One can recognise a Hflx-type G domain in the interval 306–470 (PIISILGYTN…QVETAVMKST (165 aa)). Residues 312 to 319 (GYTNSGKT), 338 to 342 (FATLD), 360 to 363 (DTIG), 429 to 432 (NKID), and 448 to 450 (SAL) each bind GTP. Residues T319 and T340 each contribute to the Mg(2+) site.

Belongs to the TRAFAC class OBG-HflX-like GTPase superfamily. HflX GTPase family. The cofactor is Mg(2+).

This chain is Putative GTP-binding protein 6 (gtpbp6), found in Xenopus laevis (African clawed frog).